Here is a 251-residue protein sequence, read N- to C-terminus: Imidazole glycerol phosphate synthase subunit HisF (251 aa).

Active-site residues include Asp-11 and Asp-130.

Belongs to the HisA/HisF family. In terms of assembly, heterodimer of HisH and HisF.

It is found in the cytoplasm. It catalyses the reaction 5-[(5-phospho-1-deoxy-D-ribulos-1-ylimino)methylamino]-1-(5-phospho-beta-D-ribosyl)imidazole-4-carboxamide + L-glutamine = D-erythro-1-(imidazol-4-yl)glycerol 3-phosphate + 5-amino-1-(5-phospho-beta-D-ribosyl)imidazole-4-carboxamide + L-glutamate + H(+). Its pathway is amino-acid biosynthesis; L-histidine biosynthesis; L-histidine from 5-phospho-alpha-D-ribose 1-diphosphate: step 5/9. Its function is as follows. IGPS catalyzes the conversion of PRFAR and glutamine to IGP, AICAR and glutamate. The HisF subunit catalyzes the cyclization activity that produces IGP and AICAR from PRFAR using the ammonia provided by the HisH subunit. This chain is Imidazole glycerol phosphate synthase subunit HisF, found in Chlorobium phaeobacteroides (strain DSM 266 / SMG 266 / 2430).